The sequence spans 525 residues: Chromosomal replication initiator protein DnaA (525 aa).

Positions 1-71 (MNDFWQHCSA…SDLAREFWNT (71 aa)) are domain I, interacts with DnaA modulators. Positions 71–188 (TPIEVQFVLD…GEADSMYERS (118 aa)) are domain II. Residues 160-182 (AAAGRRTWRPGPGAAPANGGEAD) are disordered. The segment covering 169 to 181 (PGPGAAPANGGEA) has biased composition (low complexity). Residues 189 to 405 (KLNPVLTFDN…GALRKILAYS (217 aa)) are domain III, AAA+ region. 4 residues coordinate ATP: glycine 233, glycine 235, lysine 236, and threonine 237. Positions 406–525 (KFHGREISIE…LHVLEQTLKG (120 aa)) are domain IV, binds dsDNA.

The protein belongs to the DnaA family. Oligomerizes as a right-handed, spiral filament on DNA at oriC.

Its subcellular location is the cytoplasm. In terms of biological role, plays an essential role in the initiation and regulation of chromosomal replication. ATP-DnaA binds to the origin of replication (oriC) to initiate formation of the DNA replication initiation complex once per cell cycle. Binds the DnaA box (a 9 base pair repeat at the origin) and separates the double-stranded (ds)DNA. Forms a right-handed helical filament on oriC DNA; dsDNA binds to the exterior of the filament while single-stranded (ss)DNA is stabiized in the filament's interior. The ATP-DnaA-oriC complex binds and stabilizes one strand of the AT-rich DNA unwinding element (DUE), permitting loading of DNA polymerase. After initiation quickly degrades to an ADP-DnaA complex that is not apt for DNA replication. Binds acidic phospholipids. The polypeptide is Chromosomal replication initiator protein DnaA (Burkholderia orbicola (strain MC0-3)).